Consider the following 298-residue polypeptide: Mitochondrial intermembrane space import and assembly protein 40 (298 aa).

The N-terminal 33 residues, 1 to 33 (MYRTALRPSQSALRAIRSTTSPSALVSSGARRF), are a transit peptide targeting the mitochondrion. The Mitochondrial matrix segment spans residues 34-52 (ASTTSAPKKKSTWKGAAVR). The helical; Signal-anchor for type II membrane protein transmembrane segment at 53–69 (WGLAVAAVYYYNTSPIF) threads the bilayer. Over 70 to 298 (SDELPETAGT…TAANNNKKQQ (229 aa)) the chain is Mitochondrial intermembrane. A disordered region spans residues 101–159 (RQAAEHAAARKAAQAAAKAAATPATPSESVEEQITKAEAEAEAVPEGDSKPRSESTEGV). Positions 110–121 (RKAAQAAAKAAA) are enriched in low complexity. Cystine bridges form between Cys191–Cys193, Cys202–Cys235, and Cys212–Cys225. Residues 199-243 (HGPCGEEFKAAFSCFVYSTEEPKGMDCIEKFSHMQDCFRKYPEVY) enclose the CHCH domain. 2 consecutive short sequence motifs (cx9C motif) follow at residues 202–212 (CGEEFKAAFSC) and 225–235 (CIEKFSHMQDC). The tract at residues 248–298 (ADDEEAERASAAAPAAEGTPAKEEPVENKKEEALEPATHDATAANNNKKQQ) is disordered. Residues 256 to 266 (ASAAAPAAEGT) show a composition bias toward low complexity. Residues 267 to 280 (PAKEEPVENKKEEA) are compositionally biased toward basic and acidic residues.

As to quaternary structure, monomer. Cu(2+) is required as a cofactor. It depends on Zn(2+) as a cofactor.

The protein localises to the mitochondrion inner membrane. Functionally, required for the import and folding of small cysteine-containing proteins (small Tim) in the mitochondrial intermembrane space (IMS). Forms a redox cycle with ERV1 that involves a disulfide relay system. Precursor proteins to be imported into the IMS are translocated in their reduced form into the mitochondria. The oxidized form of MIA40 forms a transient intermolecular disulfide bridge with the reduced precursor protein, resulting in oxidation of the precursor protein that now contains an intramolecular disulfide bond and is able to undergo folding in the IMS. In Neurospora crassa (strain ATCC 24698 / 74-OR23-1A / CBS 708.71 / DSM 1257 / FGSC 987), this protein is Mitochondrial intermembrane space import and assembly protein 40 (mia-40).